Reading from the N-terminus, the 209-residue chain is Large ribosomal subunit protein uL3 (209 aa).

The disordered stretch occupies residues 133–153; it reads THGNSLSHRVPGSIGQNQTPG. Position 150 is an N5-methylglutamine (Gln150).

Belongs to the universal ribosomal protein uL3 family. Part of the 50S ribosomal subunit. Forms a cluster with proteins L14 and L19. In terms of processing, methylated by PrmB.

One of the primary rRNA binding proteins, it binds directly near the 3'-end of the 23S rRNA, where it nucleates assembly of the 50S subunit. The chain is Large ribosomal subunit protein uL3 from Pectobacterium carotovorum subsp. carotovorum (strain PC1).